Here is a 205-residue protein sequence, read N- to C-terminus: uncharacterized protein (205 aa).

Residues 26–129 (DWHHVSRVAD…VQDADRLDAI (104 aa)) form the HD domain.

This is an uncharacterized protein from Bacillus subtilis (strain 168).